Here is a 201-residue protein sequence, read N- to C-terminus: Adenylyl-sulfate kinase (201 aa).

An ATP-binding site is contributed by 35–42; sequence GLSGSGKS. Catalysis depends on serine 109, which acts as the Phosphoserine intermediate.

Belongs to the APS kinase family.

It catalyses the reaction adenosine 5'-phosphosulfate + ATP = 3'-phosphoadenylyl sulfate + ADP + H(+). It participates in sulfur metabolism; hydrogen sulfide biosynthesis; sulfite from sulfate: step 2/3. In terms of biological role, catalyzes the synthesis of activated sulfate. The protein is Adenylyl-sulfate kinase of Citrobacter koseri (strain ATCC BAA-895 / CDC 4225-83 / SGSC4696).